Reading from the N-terminus, the 579-residue chain is CTP synthase 1 (579 aa).

Residues 305–559 (KIALVGKYTN…LGLVAASAGI (255 aa)) enclose the Glutamine amidotransferase type-1 domain. The active-site For GATase activity is the Cys404. Residue Lys422 forms a Glycyl lysine isopeptide (Lys-Gly) (interchain with G-Cter in ubiquitin) linkage. Active-site for GATase activity residues include His535 and Glu537.

Belongs to the CTP synthase family. As to quaternary structure, homodimer. Oligomerizes to a tetramer in the presence of its substrates UTP and ATP.

The enzyme catalyses UTP + L-glutamine + ATP + H2O = CTP + L-glutamate + ADP + phosphate + 2 H(+). It functions in the pathway pyrimidine metabolism; CTP biosynthesis via de novo pathway; CTP from UDP: step 2/2. With respect to regulation, activated by GTP and inhibited by CTP. Functionally, catalyzes the ATP-dependent amination of UTP to CTP with either L-glutamine or ammonia as the source of nitrogen. The sequence is that of CTP synthase 1 (URA7) from Saccharomyces cerevisiae (strain ATCC 204508 / S288c) (Baker's yeast).